A 181-amino-acid polypeptide reads, in one-letter code: MWSLQDSIFTCERNHEGENIIHYLCRNGGVIDLLTFRNAINDENRYLLSEYNRDGKXCMHIVVSQDKVDPINKLMLLMKWGADINSKDQKDGNTVLHIAVLTNNYEVAKWLCQQPGVDMEIINFARKTPYQIACDRANTRMMDLLXKNGARCDVPLKINTARRRASHDYGVKLIRMGESAR.

ANK repeat units lie at residues Asp-54–Ser-86, Asp-91–Ile-121, and Ala-125–Val-154.

Belongs to the polydnaviridae I-Kappa-B-like protein family.

Its function is as follows. Suppresses the host immune response through NF-kappa-B inactivation. Possesses ankyrin repeat domains required for NF-kappa-B binding but lacks the regulatory regions required for dissociation from NF-kappa-B and degradation. Therefore, prevents host NF-kappa-B release and subsequent activation. This Microplitis demolitor (Parasitoid wasp) protein is I-Kappa-B like protein C2 (C2).